We begin with the raw amino-acid sequence, 83 residues long: MLTIRLALGGSKKRPFYHLTVTDSRNPRDGSHKEQVGFFNPIARGQEVRLSVNQERVAYWLSVGAQPSERVAQLLKESAKAAA.

The protein belongs to the bacterial ribosomal protein bS16 family.

This Pseudomonas fluorescens (strain ATCC BAA-477 / NRRL B-23932 / Pf-5) protein is Small ribosomal subunit protein bS16.